A 183-amino-acid polypeptide reads, in one-letter code: CKLF-like MARVEL transmembrane domain-containing protein 6 (183 aa).

Met1 bears the N-acetylmethionine mark. The Cytoplasmic segment spans residues 1-39 (MENGAVYSPTTEEDPGPARGPRSGLAAYFFMGRLPLLRR). Ser8 is subject to Phosphoserine. Positions 33-160 (RLPLLRRVLK…DFITMLYEKR (128 aa)) constitute an MARVEL domain. A helical transmembrane segment spans residues 40–60 (VLKGLQLLLSLLAFICEEVVS). The Extracellular portion of the chain corresponds to 61-67 (QCTLCGG). A helical membrane pass occupies residues 68-88 (LYFFEFVSCSAFLLSLLILIV). The Cytoplasmic portion of the chain corresponds to 89–106 (YCTPFYERVDTTKVKSSD). The helical transmembrane segment at 107–127 (FYITLGTGCVFLLASIIFVST) threads the bilayer. Topologically, residues 128-134 (HDRTSAE) are extracellular. A helical transmembrane segment spans residues 135–155 (IAAIVFGFIASFMFLLDFITM). Over 156–183 (LYEKRQESQLRKPENTTRAEALTEPLNA) the chain is Cytoplasmic. A Phosphothreonine modification is found at Thr171.

Belongs to the chemokine-like factor family. In terms of assembly, interacts with PD-L1/CD274 (via transmembrane domain); the interaction is direct. Interacts with CMTM4. Interacts with CD58, ARG1, ENO1 and TMPO. In terms of tissue distribution, expressed in the leukocytes, placenta and testis.

The protein resides in the cell membrane. The protein localises to the early endosome membrane. It localises to the recycling endosome membrane. Its function is as follows. Master regulator of recycling and plasma membrane expression of PD-L1/CD274, an immune inhibitory ligand critical for immune tolerance to self and antitumor immunity. Associates with both constitutive and IFNG-induced PD-L1/CD274 at recycling endosomes, where it protects PD-L1/CD274 from being targeted for lysosomal degradation, likely by preventing its STUB1-mediated ubiquitination. May stabilize PD-L1/CD274 expression on antigen presenting cells and potentiates inhibitory signaling by PDCD1/CD279, its receptor on T-cells, ultimately triggering T-cell anergy. The chain is CKLF-like MARVEL transmembrane domain-containing protein 6 from Homo sapiens (Human).